The chain runs to 555 residues: Glucose-6-phosphate isomerase (555 aa).

Residue E353 is the Proton donor of the active site. Active-site residues include H384 and K516.

Belongs to the GPI family.

Its subcellular location is the cytoplasm. It catalyses the reaction alpha-D-glucose 6-phosphate = beta-D-fructose 6-phosphate. It participates in carbohydrate biosynthesis; gluconeogenesis. Its pathway is carbohydrate degradation; glycolysis; D-glyceraldehyde 3-phosphate and glycerone phosphate from D-glucose: step 2/4. Catalyzes the reversible isomerization of glucose-6-phosphate to fructose-6-phosphate. The chain is Glucose-6-phosphate isomerase from Methylobacillus flagellatus (strain ATCC 51484 / DSM 6875 / VKM B-1610 / KT).